Consider the following 416-residue polypeptide: MAEEQGRERDSVPKPSVLFLHPDLGVGGAERLVLDAALALQARGCSVKIWTAHYDPGHCFAESRELPVRCAGDWLPRGLGWGGRGAAVCAYVRMVFLALYVLFLADEEFDVVVCDQVSACIPVFRLARRRKKILFYCHFPDLLLTKRDSFLKRLYRAPIDWIEEYTTGMADCILVNSQFTAAVFKETFKSLSHIDPDVLYPSLNVTSFDSVVPEKLDDLVPKGKKFLLLSINRYERKKNLTLALEALVQLRGRLTSQDWERVHLIVAGGYDERVLENVEHYQELKKMVQQSDLGQYVTFLRSFSDKQKISLLHSCTCVLYTPSNEHFGIVPLEAMYMQCPVIAVNSGGPLESIDHSVTGFLCEPDPVHFSEAIEKFIREPSLKATMGLAGRARVKEKFSPEAFTEQLYRYVTKLLV.

Over 1–84 (MAEEQGRERD…LPRGLGWGGR (84 aa)) the chain is Cytoplasmic. The segment at residues 85-105 (GAAVCAYVRMVFLALYVLFLA) is an intramembrane region (helical). Residues 106-416 (DEEFDVVVCD…LYRYVTKLLV (311 aa)) are Cytoplasmic-facing.

The protein belongs to the glycosyltransferase group 1 family. Glycosyltransferase 4 subfamily.

The protein resides in the endoplasmic reticulum membrane. It catalyses the reaction a beta-D-Man-(1-&gt;4)-beta-D-GlcNAc-(1-&gt;4)-alpha-D-GlcNAc-diphospho-di-trans,poly-cis-dolichol + GDP-alpha-D-mannose = an alpha-D-Man-(1-&gt;3)-beta-D-Man-(1-&gt;4)-beta-D-GlcNAc-(1-&gt;4)-alpha-D-GlcNAc-diphospho-di-trans,poly-cis-dolichol + GDP + H(+). The enzyme catalyses an alpha-D-Man-(1-&gt;3)-beta-D-Man-(1-&gt;4)-beta-D-GlcNAc-(1-&gt;4)-alpha-D-GlcNAc-diphospho-di-trans,poly-cis-dolichol + GDP-alpha-D-mannose = an alpha-D-Man-(1-&gt;3)-[alpha-D-Man-(1-&gt;6)]-beta-D-Man-(1-&gt;4)-beta-D-GlcNAc-(1-&gt;4)-alpha-D-GlcNAc-diphospho-di-trans,poly-cis-dolichol + GDP + H(+). It carries out the reaction a beta-D-Man-(1-&gt;4)-beta-D-GlcNAc-(1-&gt;4)-alpha-D-GlcNAc-diphospho-di-trans,poly-cis-dolichol + GDP-alpha-D-mannose = an alpha-D-Man-(1-&gt;6)-beta-D-Man-(1-&gt;4)-beta-D-GlcNAc-(1-&gt;4)-alpha-D-GlcNAc-diphospho-di-trans,poly-cis-dolichol + GDP + H(+). The catalysed reaction is an alpha-D-Man-(1-&gt;6)-beta-D-Man-(1-&gt;4)-beta-D-GlcNAc-(1-&gt;4)-alpha-D-GlcNAc-diphospho-di-trans,poly-cis-dolichol + GDP-alpha-D-mannose = an alpha-D-Man-(1-&gt;3)-[alpha-D-Man-(1-&gt;6)]-beta-D-Man-(1-&gt;4)-beta-D-GlcNAc-(1-&gt;4)-alpha-D-GlcNAc-diphospho-di-trans,poly-cis-dolichol + GDP + H(+). The protein operates within protein modification; protein glycosylation. Its function is as follows. Mannosyltransferase that operates in the biosynthetic pathway of dolichol-linked oligosaccharides, the glycan precursors employed in protein asparagine (N)-glycosylation. The assembly of dolichol-linked oligosaccharides begins on the cytosolic side of the endoplasmic reticulum membrane and finishes in its lumen. The sequential addition of sugars to dolichol pyrophosphate produces dolichol-linked oligosaccharides containing fourteen sugars, including two GlcNAcs, nine mannoses and three glucoses. Once assembled, the oligosaccharide is transferred from the lipid to nascent proteins by oligosaccharyltransferases. Catalyzes, on the cytoplasmic face of the endoplasmic reticulum, the addition of the second and third mannose residues to the dolichol-linked oligosaccharide chain, to produce Man3GlcNAc(2)-PP-dolichol core oligosaccharide. Man3GlcNAc(2)-PP-dolichol is a substrate for ALG11, the following enzyme in the biosynthetic pathway. While both alpha 1,3 and alpha 1,6 linkages are possible, the sequential addition of alpha 1,3 followed by alpha 1,6 is probably the preferred route. The sequence is that of Alpha-1,3/1,6-mannosyltransferase ALG2 (ALG2) from Homo sapiens (Human).